A 181-amino-acid chain; its full sequence is MFKKFDEKESVSNCIQLKTSVIKGIKSQLVEQFPGIEPWLNQIMPKKDPVKIVRCHEHTEILTVSGELLFFRQRKGPFCPTLRLLHKYPFILPHQQVDKGAIKFVLSGANIMCPGLTSPGAKLYPAAVDTIVAVTAEGKQHALCVGVMKMSAEDIEKVNKGIGIENIHYLNDGLWHMKTYK.

The PUA domain maps to Leu92–Asn171.

Belongs to the MCTS1 family.

The protein resides in the cytoplasm. In Homo sapiens (Human), this protein is Malignant T-cell-amplified sequence 2.